Here is a 445-residue protein sequence, read N- to C-terminus: MSSDADAHKVGLIPVTLMVSGNIMGSGVFLLPANLAATGGIAIYGWLVTIIGALALSMVYAKMSSLDPSPGGSYAYARRCFGPFLGYQTNVLYWLACWIGNIAMVVIGVGYLSYFFPILKDPLVLTLTCVAVLWIFVLLNIVGPKMITRVQAVATVLALVPIVGIAVFGWFWFKGETYMAAWNVSGMNTFGAIQSTLNVTLWSFIGVESASVAAGVVKNPKRNVPIATIGGVLIAAVCYVLSTTAIMGMIPNAALRVSASPFGDAARMALGDTAGAIVSFCAAAGCLGSLGGWTLLAGQTAKAAADDGLFPPIFARVNKAGTPVAGLLIVGVLMTIFQFSSMSPNAAKEFGLVSSVSVIFTLVPYLYTCAALLLLGHGHFGKARPLYLLITFVAFVYCIWAVIGSGAKEVMWSFVTLMVITALYALNYNRIHKNPYPLDAPVKQD.

At 1-9 the chain is on the cytoplasmic side; the sequence is MSSDADAHK. The helical transmembrane segment at 10–30 threads the bilayer; it reads VGLIPVTLMVSGNIMGSGVFL. Ile-23 is an agmatine binding site. 2 residues coordinate L-arginine: Ile-23 and Ser-26. The Periplasmic portion of the chain corresponds to 31 to 38; sequence LPANLAAT. A helical transmembrane segment spans residues 39–59; the sequence is GGIAIYGWLVTIIGALALSMV. At 60–98 the chain is on the cytoplasmic side; sequence YAKMSSLDPSPGGSYAYARRCFGPFLGYQTNVLYWLACW. Agmatine contacts are provided by Ala-96, Cys-97, and Asn-101. Residue Ala-96 coordinates L-arginine. A helical membrane pass occupies residues 99 to 119; it reads IGNIAMVVIGVGYLSYFFPIL. At 120 to 122 the chain is on the periplasmic side; sequence KDP. The chain crosses the membrane as a helical span at residues 123–143; the sequence is LVLTLTCVAVLWIFVLLNIVG. The Cytoplasmic segment spans residues 144-152; the sequence is PKMITRVQA. The chain crosses the membrane as a helical span at residues 153–173; the sequence is VATVLALVPIVGIAVFGWFWF. The Periplasmic segment spans residues 174-196; sequence KGETYMAAWNVSGMNTFGAIQST. A helical membrane pass occupies residues 197-217; it reads LNVTLWSFIGVESASVAAGVV. The L-arginine site is built by Trp-202 and Ile-205. Ile-205 contacts agmatine. At 218 to 225 the chain is on the cytoplasmic side; the sequence is KNPKRNVP. The chain crosses the membrane as a helical span at residues 226–246; it reads IATIGGVLIAAVCYVLSTTAI. Residues 247–275 are Periplasmic-facing; the sequence is MGMIPNAALRVSASPFGDAARMALGDTAG. Residues 276-296 traverse the membrane as a helical segment; the sequence is AIVSFCAAAGCLGSLGGWTLL. Residue Trp-293 coordinates agmatine. Over 297 to 319 the chain is Cytoplasmic; it reads AGQTAKAAADDGLFPPIFARVNK. Residues 320-340 form a helical membrane-spanning segment; sequence AGTPVAGLLIVGVLMTIFQFS. At 341 to 355 the chain is on the periplasmic side; that stretch reads SMSPNAAKEFGLVSS. The helical transmembrane segment at 356 to 376 threads the bilayer; it reads VSVIFTLVPYLYTCAALLLLG. Ser-357 is an L-arginine binding site. The Cytoplasmic segment spans residues 377-385; the sequence is HGHFGKARP. The helical transmembrane segment at 386–406 threads the bilayer; it reads LYLLITFVAFVYCIWAVIGSG. Over 407–408 the chain is Periplasmic; that stretch reads AK. The chain crosses the membrane as a helical span at residues 409–429; it reads EVMWSFVTLMVITALYALNYN. At 430–445 the chain is on the cytoplasmic side; it reads RIHKNPYPLDAPVKQD.

Belongs to the amino acid-polyamine-organocation (APC) superfamily. Basic amino acid/polyamine antiporter (APA) (TC 2.A.3.2) family. As to quaternary structure, homodimer; each subunit has its own individual transport capacity.

It is found in the cell inner membrane. The enzyme catalyses agmatine(in) + L-arginine(out) = agmatine(out) + L-arginine(in). In terms of biological role, major component of the acid-resistance (AR) system allowing enteric pathogens to survive the acidic environment in the stomach. Exchanges extracellular arginine for its intracellular decarboxylation product agmatine (Agm) thereby expelling intracellular protons. Probably undergoes several conformational states in order to translocate the substrate across the membrane; keeps the substrate accessible to only 1 side of the membrane at a time by opening and closing 3 membrane-internal gates. The sequence is that of Arginine/agmatine antiporter (adiC) from Salmonella typhi.